Consider the following 49-residue polypeptide: Large ribosomal subunit protein bL33A (49 aa).

This sequence belongs to the bacterial ribosomal protein bL33 family.

The sequence is that of Large ribosomal subunit protein bL33A from Lactobacillus johnsonii (strain CNCM I-12250 / La1 / NCC 533).